A 371-amino-acid polypeptide reads, in one-letter code: uncharacterized protein (371 aa).

A run of 7 helical transmembrane segments spans residues 9 to 29 (FTLD…VFLI), 58 to 78 (VLAF…FLAI), 98 to 118 (LIVA…SFIF), 133 to 153 (LAPF…VSVI), 159 to 179 (YDVN…ALAA), 183 to 203 (ISNF…IGDW), and 330 to 350 (IIEI…MVVV).

It belongs to the MscS (TC 1.A.23) family.

It is found in the cell membrane. May play a role in resistance to osmotic downshock. This is an uncharacterized protein from Bacillus subtilis (strain 168).